The primary structure comprises 319 residues: RWD domain-containing protein 2B (319 aa).

Positions 41–165 (SELDLLASMF…EWVREHASGY (125 aa)) constitute an RWD domain. Phosphoserine is present on Ser275.

This Pongo abelii (Sumatran orangutan) protein is RWD domain-containing protein 2B (RWDD2B).